The primary structure comprises 226 residues: CASP-like protein 2BC1 (226 aa).

The Cytoplasmic segment spans residues 1–37 (MRKHIDIVFSRLSGPILNPPPDNNVIPKTDRKLRITE). A helical transmembrane segment spans residues 38-58 (VILRFAVVIFALVSAIMVGTA). The Extracellular segment spans residues 59–78 (SGTRDLGGGIRIHAHFTLLK). The helical transmembrane segment at 79–99 (TLPFLVIVDGILAVYSLLQGL) threads the bilayer. Residues 100–114 (RCFLSLYMRHILLNK) lie on the Cytoplasmic side of the membrane. A helical transmembrane segment spans residues 115–135 (ALAWTIFCCDQALAYVIFAAA). The Extracellular portion of the chain corresponds to 136–170 (ASTAETAYISEQGLDELQWIKVCMFFRAYCFKSGA). The helical transmembrane segment at 171-191 (GMINAFLAALCMVFVSGMSVF) threads the bilayer. The Cytoplasmic portion of the chain corresponds to 192 to 226 (HLFRLYGEKRAYGHIAEQVVISEEAAERRNSLNGI).

This sequence belongs to the Casparian strip membrane proteins (CASP) family. Homodimer and heterodimers.

It is found in the cell membrane. This chain is CASP-like protein 2BC1, found in Picea sitchensis (Sitka spruce).